The sequence spans 1706 residues: 5'-3' exoribonuclease 1 (1706 aa).

S1348 carries the post-translational modification Phosphoserine. A disordered region spans residues 1619-1706 (ENKEAQSSQA…VNFGVSKPSE (88 aa)). The span at 1623–1642 (AQSSQATPVQTSQPDSSNIV) shows a compositional bias: polar residues. Position 1645 is a phosphoserine (S1645). Residues 1647 to 1657 (RESSSASLKSS) show a composition bias toward low complexity. A compositionally biased stretch (polar residues) spans 1658–1676 (PIAQPASSFQVETASQGHS). Residues 1677–1694 (ISHHKSTPISSSRRKSRK) show a composition bias toward basic residues.

It belongs to the 5'-3' exonuclease family. As to quaternary structure, found in a mRNP complex with UPF1, UPF2, UPF3B and XRN1. Associates with alpha and beta tubulins. Interacts with DIS3L2. Interacts with ZC3HAV1 in an RNA-dependent manner. Interacts with ZFP36L1. Interacts with TRIM71 (via NHL repeats) in an RNA-dependent manner. Interacts with YTHDC2 (via ANK repeats). Interacts with DHX34; the interaction is RNA-independent. In terms of tissue distribution, expressed in heart, brain, pancreas, spleen, testis, osteogenic sarcoma (OGS) biopsy and primary cell lines.

The protein resides in the cytoplasm. Major 5'-3' exoribonuclease involved in mRNA decay. Required for the 5'-3'-processing of the G4 tetraplex-containing DNA and RNA substrates. The kinetic of hydrolysis is faster for G4 RNA tetraplex than for G4 DNA tetraplex and monomeric RNA tetraplex. Binds to RNA and DNA. Plays a role in replication-dependent histone mRNA degradation. May act as a tumor suppressor protein in osteogenic sarcoma (OGS). This chain is 5'-3' exoribonuclease 1, found in Homo sapiens (Human).